Consider the following 640-residue polypeptide: Threonine--tRNA ligase (640 aa).

A TGS domain is found at 1–60 (MKITFPDGAVKEFEPGVSTADIAASISPGLKKKALAGKLNGELLDLVTPIHEDGAIEIVT). Residues 241 to 538 (DHRKLGKELD…LIEEYKGAFP (298 aa)) form a catalytic region. Residues C334, H385, and H515 each coordinate Zn(2+).

It belongs to the class-II aminoacyl-tRNA synthetase family. Homodimer. Zn(2+) serves as cofactor.

The protein resides in the cytoplasm. It carries out the reaction tRNA(Thr) + L-threonine + ATP = L-threonyl-tRNA(Thr) + AMP + diphosphate + H(+). Functionally, catalyzes the attachment of threonine to tRNA(Thr) in a two-step reaction: L-threonine is first activated by ATP to form Thr-AMP and then transferred to the acceptor end of tRNA(Thr). Also edits incorrectly charged L-seryl-tRNA(Thr). The sequence is that of Threonine--tRNA ligase from Listeria monocytogenes serotype 4b (strain CLIP80459).